The chain runs to 140 residues: Large ribosomal subunit protein uL14 (140 aa).

The protein belongs to the universal ribosomal protein uL14 family.

The chain is Large ribosomal subunit protein uL14 (RpL23) from Drosophila melanogaster (Fruit fly).